Here is a 176-residue protein sequence, read N- to C-terminus: NAD(P)H-quinone oxidoreductase subunit 6, chloroplastic (176 aa).

Helical transmembrane passes span 10 to 30, 32 to 52, 61 to 81, 92 to 112, and 152 to 172; these read FLLV…VLLP, PIYS…FYIL, AQLL…VMFM, LWTV…VSLI, and FFLP…GAIT.

The protein belongs to the complex I subunit 6 family. As to quaternary structure, NDH is composed of at least 16 different subunits, 5 of which are encoded in the nucleus.

The protein localises to the plastid. It is found in the chloroplast thylakoid membrane. The enzyme catalyses a plastoquinone + NADH + (n+1) H(+)(in) = a plastoquinol + NAD(+) + n H(+)(out). It catalyses the reaction a plastoquinone + NADPH + (n+1) H(+)(in) = a plastoquinol + NADP(+) + n H(+)(out). Its function is as follows. NDH shuttles electrons from NAD(P)H:plastoquinone, via FMN and iron-sulfur (Fe-S) centers, to quinones in the photosynthetic chain and possibly in a chloroplast respiratory chain. The immediate electron acceptor for the enzyme in this species is believed to be plastoquinone. Couples the redox reaction to proton translocation, and thus conserves the redox energy in a proton gradient. The chain is NAD(P)H-quinone oxidoreductase subunit 6, chloroplastic (ndhG) from Daucus carota (Wild carrot).